The primary structure comprises 577 residues: Arginine--tRNA ligase (577 aa).

Positions 132–142 (ANPTGPLHVGH) match the 'HIGH' region motif.

The protein belongs to the class-I aminoacyl-tRNA synthetase family. As to quaternary structure, monomer.

It is found in the cytoplasm. The enzyme catalyses tRNA(Arg) + L-arginine + ATP = L-arginyl-tRNA(Arg) + AMP + diphosphate. This is Arginine--tRNA ligase from Herminiimonas arsenicoxydans.